The primary structure comprises 262 residues: tRNA pseudouridine synthase A (262 aa).

Catalysis depends on D51, which acts as the Nucleophile. Y109 lines the substrate pocket.

The protein belongs to the tRNA pseudouridine synthase TruA family. Homodimer.

The catalysed reaction is uridine(38/39/40) in tRNA = pseudouridine(38/39/40) in tRNA. Its function is as follows. Formation of pseudouridine at positions 38, 39 and 40 in the anticodon stem and loop of transfer RNAs. The chain is tRNA pseudouridine synthase A from Aliivibrio salmonicida (strain LFI1238) (Vibrio salmonicida (strain LFI1238)).